A 449-amino-acid polypeptide reads, in one-letter code: UDP-N-acetylmuramoylalanine--D-glutamate ligase (449 aa).

118 to 124 (GSNGKTT) contacts ATP.

The protein belongs to the MurCDEF family.

It is found in the cytoplasm. It carries out the reaction UDP-N-acetyl-alpha-D-muramoyl-L-alanine + D-glutamate + ATP = UDP-N-acetyl-alpha-D-muramoyl-L-alanyl-D-glutamate + ADP + phosphate + H(+). It functions in the pathway cell wall biogenesis; peptidoglycan biosynthesis. In terms of biological role, cell wall formation. Catalyzes the addition of glutamate to the nucleotide precursor UDP-N-acetylmuramoyl-L-alanine (UMA). In Leuconostoc mesenteroides subsp. mesenteroides (strain ATCC 8293 / DSM 20343 / BCRC 11652 / CCM 1803 / JCM 6124 / NCDO 523 / NBRC 100496 / NCIMB 8023 / NCTC 12954 / NRRL B-1118 / 37Y), this protein is UDP-N-acetylmuramoylalanine--D-glutamate ligase.